A 642-amino-acid polypeptide reads, in one-letter code: 2-oxoacid:ferredoxin oxidoreductase 2, subunit alpha (642 aa).

Residues 263–267 (YPITP) carry the YPITP motif motif. 2 residues coordinate substrate: T266 and R356.

As to quaternary structure, heterodimer composed of an alpha and a beta subunit.

The enzyme catalyses a 2-oxocarboxylate + 2 oxidized [2Fe-2S]-[ferredoxin] + CoA = an acyl-CoA + 2 reduced [2Fe-2S]-[ferredoxin] + CO2 + H(+). Functionally, catalyzes the coenzyme A-dependent oxidative decarboxylation of different 2-oxoacids such as pyruvate, 2-oxobutyrate, glyoxylate and 2-oxoglutarate to form their CoA derivatives. The chain is 2-oxoacid:ferredoxin oxidoreductase 2, subunit alpha from Aeropyrum pernix (strain ATCC 700893 / DSM 11879 / JCM 9820 / NBRC 100138 / K1).